We begin with the raw amino-acid sequence, 270 residues long: S-adenosylmethionine decarboxylase proenzyme (270 aa).

Catalysis depends on Ser-117, which acts as the Schiff-base intermediate with substrate; via pyruvic acid. Ser-117 is modified (pyruvic acid (Ser); by autocatalysis). His-122 acts as the Proton acceptor; for processing activity in catalysis. The active-site Proton donor; for catalytic activity is Cys-145.

The protein belongs to the prokaryotic AdoMetDC family. Type 2 subfamily. In terms of assembly, heterooctamer of four alpha and four beta chains arranged as a tetramer of alpha/beta heterodimers. The cofactor is pyruvate. In terms of processing, is synthesized initially as an inactive proenzyme. Formation of the active enzyme involves a self-maturation process in which the active site pyruvoyl group is generated from an internal serine residue via an autocatalytic post-translational modification. Two non-identical subunits are generated from the proenzyme in this reaction, and the pyruvate is formed at the N-terminus of the alpha chain, which is derived from the carboxyl end of the proenzyme. The post-translation cleavage follows an unusual pathway, termed non-hydrolytic serinolysis, in which the side chain hydroxyl group of the serine supplies its oxygen atom to form the C-terminus of the beta chain, while the remainder of the serine residue undergoes an oxidative deamination to produce ammonia and the pyruvoyl group blocking the N-terminus of the alpha chain.

The catalysed reaction is S-adenosyl-L-methionine + H(+) = S-adenosyl 3-(methylsulfanyl)propylamine + CO2. It participates in amine and polyamine biosynthesis; S-adenosylmethioninamine biosynthesis; S-adenosylmethioninamine from S-adenosyl-L-methionine: step 1/1. Functionally, catalyzes the decarboxylation of S-adenosylmethionine to S-adenosylmethioninamine (dcAdoMet), the propylamine donor required for the synthesis of the polyamines spermine and spermidine from the diamine putrescine. In Pseudoalteromonas translucida (strain TAC 125), this protein is S-adenosylmethionine decarboxylase proenzyme.